We begin with the raw amino-acid sequence, 213 residues long: Octanoyltransferase (213 aa).

Residues 35 to 213 (DKHGDAVLLL…ERHLPTLVGA (179 aa)) form the BPL/LPL catalytic domain. Substrate is bound by residues 73 to 80 (RGGKITWH), 145 to 147 (AIG), and 158 to 160 (GFS). Catalysis depends on C176, which acts as the Acyl-thioester intermediate.

This sequence belongs to the LipB family.

Its subcellular location is the cytoplasm. It catalyses the reaction octanoyl-[ACP] + L-lysyl-[protein] = N(6)-octanoyl-L-lysyl-[protein] + holo-[ACP] + H(+). The protein operates within protein modification; protein lipoylation via endogenous pathway; protein N(6)-(lipoyl)lysine from octanoyl-[acyl-carrier-protein]: step 1/2. Its function is as follows. Catalyzes the transfer of endogenously produced octanoic acid from octanoyl-acyl-carrier-protein onto the lipoyl domains of lipoate-dependent enzymes. Lipoyl-ACP can also act as a substrate although octanoyl-ACP is likely to be the physiological substrate. This is Octanoyltransferase from Salinispora arenicola (strain CNS-205).